The following is a 459-amino-acid chain: Cysteine--tRNA ligase (459 aa).

Position 27 (Cys27) interacts with Zn(2+). The 'HIGH' region signature appears at 29–39 (PTVYDDAHLGH). Zn(2+) contacts are provided by Cys202, His231, and Glu235. The short motif at 263–267 (KMSKS) is the 'KMSKS' region element. Lys266 provides a ligand contact to ATP.

The protein belongs to the class-I aminoacyl-tRNA synthetase family. Monomer. It depends on Zn(2+) as a cofactor.

It localises to the cytoplasm. The enzyme catalyses tRNA(Cys) + L-cysteine + ATP = L-cysteinyl-tRNA(Cys) + AMP + diphosphate. The sequence is that of Cysteine--tRNA ligase from Campylobacter fetus subsp. fetus (strain 82-40).